The chain runs to 429 residues: UDP-N-acetylglucosamine 1-carboxyvinyltransferase 2 (429 aa).

22-23 (KN) contacts phosphoenolpyruvate. R92 lines the UDP-N-acetyl-alpha-D-glucosamine pocket. Catalysis depends on C116, which acts as the Proton donor. C116 carries the 2-(S-cysteinyl)pyruvic acid O-phosphothioketal modification. UDP-N-acetyl-alpha-D-glucosamine is bound by residues 121–125 (RPIDQ), D305, and I327.

It belongs to the EPSP synthase family. MurA subfamily.

It localises to the cytoplasm. It catalyses the reaction phosphoenolpyruvate + UDP-N-acetyl-alpha-D-glucosamine = UDP-N-acetyl-3-O-(1-carboxyvinyl)-alpha-D-glucosamine + phosphate. The protein operates within cell wall biogenesis; peptidoglycan biosynthesis. Cell wall formation. Adds enolpyruvyl to UDP-N-acetylglucosamine. The polypeptide is UDP-N-acetylglucosamine 1-carboxyvinyltransferase 2 (Bacillus subtilis (strain 168)).